A 1414-amino-acid polypeptide reads, in one-letter code: MVHATACSEIIRAEVAELLGVRADALHPGANLVGQGLDSIRMMSLVGRWRRKGIAVDFATLAATPTIEAWSQLVSAGTGVAPTAVAAPGDAGLSQEGEPFPLAPMQHAMWVGRHDHQQLGGVAGHLYVEFDGARVDPDRLRAAATRLALRHPMLRVQFLPDGTQRIPPAAGSRDFPISVADLRHVAPDVVDQRLAGIRDAKSHQQLDGAVFELALTLLPGERTRLHVDLDMQAADAMSYRILLADLAALYDGREPPALGYTYQEYRQAIEAEETLPQPVRDADRDWWAQRIPQLPDPPALPTRAGGERDRRRSTRRWHWLDPQTRDALFARARARGITPAMTLAAAFANVLARWSASSRFLLNLPLFSRQALHPDVDLLVGDFTSSLLLDVDLTGARTAAARAQAVQEALRSAAGHSAYPGLSVLRDLSRHRGTQVLAPVVFTSALGLGDLFCPDVTEQFGTPGWIISQGPQVLLDAQVTEFDGGVLVNWDVREGVFAPGVIDAMFTHQVDELLRLAAGDDAWDAPSPSALPAAQRAVRAALNGRTAAPSTEALHDGFFRQAQQQPDAPAVFASSGDLSYAQLRDQASAVAAALRAAGLRVGDTVAVLGPKTGEQVAAVLGILAAGGVYLPIGVDQPRDRAERILATGSVNLALVCGPPCQVRVPVPTLLLADVLAAAPAEFVPGPSDPTALAYVLFTSGSTGEPKGVEVAHDAAMNTVETFIRHFELGAADRWLALATLECDMSVLDIFAALRSGGAIVVVDEAQRRDPDAWARLIDTYEVTALNFMPGWLDMLLEVGGGRLSSLRAVAVGGDWVRPDLARRLQVQAPSARFAGLGGATETAVHATIFEVQDAANLPPDWASVPYGVPFPNNACRVVADSGDDCPDWVAGELWVSGRGIARGYRGRPELTAERFVEHDGRTWYRTGDLARYWHDGTLEFVGRADHRVKISGYRVELGEIEAALQRLPGVHAAAATVLPGGSDVLAAAVCVDDAGVTAESIRQQLADLVPAHMIPRHVTLLDRIPFTDSGKIDRAEVGALLAAEVERSGDRSAPYAAPRTVLQRALRRIVADILGRANDAVGVHDDFFALGGDSVLATQVVAGIRRWLDSPSLMVADMFAARTIAALAQLLTGREANADRLELVAEVYLEIANMTSADVMAALDPIEQPAQPAFKPWVKRFTGTDKPGAVLVFPHAGGAAAAYRWLAKSLVANDVDTFVVQYPQRADRRSHPAADSIEALALELFEAGDWHLTAPLTLFGHCMGAIVAFEFARLAERNGVPVRALWASSGQAPSTVAASGPLPTADRDVLADMVDLGGTDPVLLEDEEFVELLVPAVKADYRALSGYSCPPDVRIRANIHAVGGNRDHRISREMLTSWETHTSGRFTLSHFDGGHFYLNDHLDAVARMVSADVR.

One can recognise a Carrier 1 domain in the interval 5-78 (TACSEIIRAE…AWSQLVSAGT (74 aa)). Ser-39 bears the O-(pantetheine 4'-phosphoryl)serine mark. The interval 96–394 (EGEPFPLAPM…SSLLLDVDLT (299 aa)) is condensation/cyclization. The adenylation stretch occupies residues 579-975 (SYAQLRDQAS…RLPGVHAAAA (397 aa)). In terms of domain architecture, Carrier 2 spans 1057–1135 (APRTVLQRAL…ALAQLLTGRE (79 aa)). Ser-1094 bears the O-(pantetheine 4'-phosphoryl)serine mark. The tract at residues 1188–1413 (GAVLVFPHAG…AVARMVSADV (226 aa)) is thioesterase.

This sequence belongs to the ATP-dependent AMP-binding enzyme family. MbtB subfamily. It depends on pantetheine 4'-phosphate as a cofactor. In terms of processing, 4'-phosphopantetheine is transferred from CoA to a specific serine in each of the two carrier protein domains, leading to their activation from apo to holo forms.

It functions in the pathway siderophore biosynthesis; mycobactin biosynthesis. In terms of biological role, involved in the initial steps of the mycobactin biosynthetic pathway. Putatively couples activated salicylic acid with serine or threonine and cyclizes this precursor to the hydroxyphenyloxazoline ring system present in this class of siderophores. The chain is Phenyloxazoline synthase MbtB (mbtB) from Mycobacterium bovis (strain ATCC BAA-935 / AF2122/97).